The primary structure comprises 280 residues: Chaperone protein DnaJ 2 (280 aa).

Residues 6–70 enclose the J domain; that stretch reads DYYAILGVPR…EKRRIYDTYG (65 aa).

It belongs to the DnaJ family. As to quaternary structure, forms a heterononamer with DnaJ and DafA in the resting state. Three copies of each protein are present in the complex.

It is found in the cytoplasm. Functionally, does not influence ATP binding or hydrolysis nor ADP release. Exerts influence on the interaction of DnaK with substrates; in the presence of DafA, DnaJ inhibits substrate binding, and substrate already bound to DnaK is displaced by DnaJ and DafA. This chain is Chaperone protein DnaJ 2 (dnaJ2), found in Thermus thermophilus (strain ATCC 27634 / DSM 579 / HB8).